Consider the following 154-residue polypeptide: MARVTDKITHLIELVIKDMCYELVGIEYVASGKHSILRVFIDTDKKGVGVNDCEKVSRQLSSIFDVEEPISGQYTLEVSSPGIERPLFHKEHYQRFLGANVKLRMVRPIDGRRNFFGVIGCVNEADNTFELVGELDLVILDIDLIEKANLVVDF.

Belongs to the RimP family.

It is found in the cytoplasm. Functionally, required for maturation of 30S ribosomal subunits. The polypeptide is Ribosome maturation factor RimP (Ruthia magnifica subsp. Calyptogena magnifica).